The following is a 136-amino-acid chain: Large ribosomal subunit protein bL17 (136 aa).

The protein belongs to the bacterial ribosomal protein bL17 family. Part of the 50S ribosomal subunit. Contacts protein L32.

In Akkermansia muciniphila (strain ATCC BAA-835 / DSM 22959 / JCM 33894 / BCRC 81048 / CCUG 64013 / CIP 107961 / Muc), this protein is Large ribosomal subunit protein bL17.